A 439-amino-acid polypeptide reads, in one-letter code: MTTYFDKIEKISFEGEKSTNPFAFKHYDANQVILGKTMAEHLRLAVCYWHTFCWNGNDMFGLGSLERSWQKNPNVLAGAEQKADIAFEFLNKLGVPYYCFHDVDIAPEGNSVREYVQNFHHIVDILERKQVETGVKLLWGTANCFTNPRYMSGAATNPNPEVFAWAATQVFNAMNATQRLGGENYVLWGGREGYETLLNTDLKREREQIGRFMQMVVEHKHKIGFKGTLLIEPKPQEPTKHQYDYDVATVYGFLKQFGLEKEIKVNIEANHATLAGHTFQHEIATACALDIFGSIDANRGDPQLGWDTDQFPNSVEENTLVMYEILKHGGFTTGGFNFDAKIRRQSIDPYDLFYAHIGAIDVLALSLKRAAKMLQEKTLQKIVNARYAGWNSELGQHILQGKTSLETLAQLVQQKDLAPKPVSGQQEYLENLVNQVIYS.

Catalysis depends on residues His101 and Asp104. Mg(2+) is bound by residues Glu232, Glu268, His271, Asp296, Asp307, Asp309, and Asp339.

The protein belongs to the xylose isomerase family. Homotetramer. Mg(2+) serves as cofactor.

The protein localises to the cytoplasm. It catalyses the reaction alpha-D-xylose = alpha-D-xylulofuranose. The protein is Xylose isomerase of Haemophilus influenzae (strain 86-028NP).